The chain runs to 101 residues: Protein Tat (101 aa).

Residues 1 to 20 (MEPVDPNLEPWKHPGSQPTT) form a disordered region. The tract at residues 1 to 24 (MEPVDPNLEPWKHPGSQPTTACSN) is interaction with human CREBBP. The segment at 1–48 (MEPVDPNLEPWKHPGSQPTTACSNCYCKVCCWHCQLCFLKKGLGISYG) is transactivation. Zn(2+) contacts are provided by C22, C25, and C27. Positions 22-37 (CSNCYCKVCCWHCQLC) are cysteine-rich. K28 carries the post-translational modification N6-acetyllysine; by host PCAF. C30, H33, C34, and C37 together coordinate Zn(2+). The segment at 38-48 (FLKKGLGISYG) is core. Residues 48-101 (GKKKRKPRRGPPQGSKDHQTLIPKQPLPQSQRVSAGQEESKKKVESKAKTDRFA) are disordered. A Nuclear localization signal, RNA-binding (TAR), and protein transduction motif is present at residues 49–57 (KKKRKPRRG). Positions 49-86 (KKKRKPRRGPPQGSKDHQTLIPKQPLPQSQRVSAGQEE) are interaction with the host capping enzyme RNGTT. N6-acetyllysine; by host EP300 and GCN5L2 occurs at positions 50 and 51. An Asymmetric dimethylarginine; by host PRMT6 modification is found at R52. Residue K71 forms a Glycyl lysine isopeptide (Lys-Gly) (interchain with G-Cter in ubiquitin) linkage. Residues 85–101 (EESKKKVESKAKTDRFA) are compositionally biased toward basic and acidic residues.

The protein belongs to the lentiviruses Tat family. Interacts with host CCNT1. Associates with the P-TEFb complex composed at least of Tat, P-TEFb (CDK9 and CCNT1), TAR RNA, RNA Pol II. Recruits the HATs CREBBP, TAF1/TFIID, EP300, PCAF and GCN5L2. Interacts with host KAT5/Tip60; this interaction targets the latter to degradation. Interacts with the host deacetylase SIRT1. Interacts with host capping enzyme RNGTT; this interaction stimulates RNGTT. Binds to host KDR, and to the host integrins ITGAV/ITGB3 and ITGA5/ITGB1. Interacts with host KPNB1/importin beta-1 without previous binding to KPNA1/importin alpha-1. Interacts with EIF2AK2. Interacts with host nucleosome assembly protein NAP1L1; this interaction may be required for the transport of Tat within the nucleus, since the two proteins interact at the nuclear rim. Interacts with host C1QBP/SF2P32; this interaction involves lysine-acetylated Tat. Interacts with the host chemokine receptors CCR2, CCR3 and CXCR4. Interacts with host DPP4/CD26; this interaction may trigger an anti-proliferative effect. Interacts with host LDLR. Interacts with the host extracellular matrix metalloproteinase MMP1. Interacts with host PRMT6; this interaction mediates Tat's methylation. Interacts with, and is ubiquitinated by MDM2/Hdm2. Interacts with host PSMC3 and HTATIP2. Interacts with STAB1; this interaction may overcome SATB1-mediated repression of IL2 and IL2RA (interleukin) in T cells by binding to the same domain than HDAC1. Interacts (when acetylated) with human CDK13, thereby increasing HIV-1 mRNA splicing and promoting the production of the doubly spliced HIV-1 protein Nef. Interacts with host TBP; this interaction modulates the activity of transcriptional pre-initiation complex. Interacts with host RELA. Interacts with host PLSCR1; this interaction negatively regulates Tat transactivation activity by altering its subcellular distribution. In terms of processing, asymmetrical arginine methylation by host PRMT6 seems to diminish the transactivation capacity of Tat and affects the interaction with host CCNT1. Acetylation by EP300, CREBBP, GCN5L2/GCN5 and PCAF regulates the transactivation activity of Tat. EP300-mediated acetylation of Lys-50 promotes dissociation of Tat from the TAR RNA through the competitive binding to PCAF's bromodomain. In addition, the non-acetylated Tat's N-terminus can also interact with PCAF. PCAF-mediated acetylation of Lys-28 enhances Tat's binding to CCNT1. Lys-50 is deacetylated by SIRT1. Post-translationally, polyubiquitination by host MDM2 does not target Tat to degradation, but activates its transactivation function and fosters interaction with CCNT1 and TAR RNA. In terms of processing, phosphorylated by EIF2AK2 on serine and threonine residues adjacent to the basic region important for TAR RNA binding and function. Phosphorylation of Tat by EIF2AK2 is dependent on the prior activation of EIF2AK2 by dsRNA.

The protein localises to the host nucleus. The protein resides in the host nucleolus. Its subcellular location is the host cytoplasm. It localises to the secreted. Transcriptional activator that increases RNA Pol II processivity, thereby increasing the level of full-length viral transcripts. Recognizes a hairpin structure at the 5'-LTR of the nascent viral mRNAs referred to as the transactivation responsive RNA element (TAR) and recruits the cyclin T1-CDK9 complex (P-TEFb complex) that will in turn hyperphosphorylate the RNA polymerase II to allow efficient elongation. The CDK9 component of P-TEFb and other Tat-activated kinases hyperphosphorylate the C-terminus of RNA Pol II that becomes stabilized and much more processive. Other factors such as HTATSF1/Tat-SF1, SUPT5H/SPT5, and HTATIP2 are also important for Tat's function. Besides its effect on RNA Pol II processivity, Tat induces chromatin remodeling of proviral genes by recruiting the histone acetyltransferases (HATs) CREBBP, EP300 and PCAF to the chromatin. This also contributes to the increase in proviral transcription rate, especially when the provirus integrates in transcriptionally silent region of the host genome. To ensure maximal activation of the LTR, Tat mediates nuclear translocation of NF-kappa-B by interacting with host RELA. Through its interaction with host TBP, Tat may also modulate transcription initiation. Tat can reactivate a latently infected cell by penetrating in it and transactivating its LTR promoter. In the cytoplasm, Tat is thought to act as a translational activator of HIV-1 mRNAs. Functionally, extracellular circulating Tat can be endocytosed by surrounding uninfected cells via the binding to several surface receptors such as CD26, CXCR4, heparan sulfate proteoglycans (HSPG) or LDLR. Neurons are rarely infected, but they internalize Tat via their LDLR. Through its interaction with nuclear HATs, Tat is potentially able to control the acetylation-dependent cellular gene expression. Modulates the expression of many cellular genes involved in cell survival, proliferation or in coding for cytokines or cytokine receptors. Tat plays a role in T-cell and neurons apoptosis. Tat induced neurotoxicity and apoptosis probably contribute to neuroAIDS. Circulating Tat also acts as a chemokine-like and/or growth factor-like molecule that binds to specific receptors on the surface of the cells, affecting many cellular pathways. In the vascular system, Tat binds to ITGAV/ITGB3 and ITGA5/ITGB1 integrins dimers at the surface of endothelial cells and competes with bFGF for heparin-binding sites, leading to an excess of soluble bFGF. The chain is Protein Tat from Human immunodeficiency virus type 1 group M subtype A (isolate U455) (HIV-1).